The chain runs to 327 residues: 2-keto-3-deoxygluconate permease (327 aa).

The next 10 membrane-spanning stretches (helical) occupy residues 10–30 (IPGG…TFSP), 42–62 (GMIT…GASI), 73–93 (KSGT…AIAS), 95–115 (IIPE…LALV), 139–159 (AGAF…IILG), 163–183 (IASF…VGFA), 199–219 (VQTL…LTVI), 224–244 (LLGI…LIIA), 254–274 (TAGI…VLIA), and 289–309 (SLVA…TSIW).

It belongs to the KdgT transporter family.

It localises to the cell inner membrane. It catalyses the reaction 2-dehydro-3-deoxy-D-gluconate(in) + H(+)(in) = 2-dehydro-3-deoxy-D-gluconate(out) + H(+)(out). Its function is as follows. Catalyzes the proton-dependent uptake of 2-keto-3-deoxygluconate (KDG) into the cell. The chain is 2-keto-3-deoxygluconate permease from Escherichia coli O157:H7.